Here is a 481-residue protein sequence, read N- to C-terminus: GTPase Der (481 aa).

2 EngA-type G domains span residues 47 to 210 (PVLA…PDVS) and 221 to 394 (RRVA…ESWE). GTP is bound by residues 53-60 (GRPNVGKS), 100-104 (DTGGW), 162-165 (NKVD), 227-234 (GRPNVGKS), 274-278 (DTAGI), and 339-342 (NKWD). Residues 395–477 (TRIPTGKFNA…PIVLNMRVRE (83 aa)) form the KH-like domain.

Belongs to the TRAFAC class TrmE-Era-EngA-EngB-Septin-like GTPase superfamily. EngA (Der) GTPase family. In terms of assembly, associates with the 50S ribosomal subunit.

GTPase that plays an essential role in the late steps of ribosome biogenesis. In Leifsonia xyli subsp. xyli (strain CTCB07), this protein is GTPase Der.